A 327-amino-acid chain; its full sequence is Leucotoxin LukDv (327 aa).

A signal peptide spans 1–26; that stretch reads MKMKKLVKSSVASSIALLLLSNTVDA.

Belongs to the aerolysin family. In terms of assembly, toxicity requires sequential binding and synergistic association of a class S and a class F component which form heterooligomeric complexes. LukEv (class S) associates with LukDv (class F).

It is found in the secreted. Its function is as follows. Part of a bi-component leucotoxin that acts by forming pores in the membrane of the target cells. The activity of LukEv-LukDv to rabbit leukocytes is similar to that of the Panton-Valentine leucocidin (PVL). LukEv-LukDv is hemolytic to rabbit red blood cells although the activity is only 8% of gamma-hemolysin. This chain is Leucotoxin LukDv (lukDv), found in Staphylococcus aureus (strain NCTC 8325 / PS 47).